The chain runs to 515 residues: UPF0053 protein BUsg_314 (515 aa).

7 consecutive transmembrane segments (helical) span residues 14–34 (LTLV…VAIL), 49–69 (IGLG…SWVV), 79–99 (NFFS…FLLF), 125–145 (FWAV…DAII), 150–170 (MVNQ…LMLL), 185–205 (VVVL…AEAL), and 207–227 (FYIP…IEIF). CBS domains follow at residues 309–368 (MTPR…NIDV) and 372–432 (ASQI…DADE).

The protein belongs to the UPF0053 family.

Its subcellular location is the cell membrane. This Buchnera aphidicola subsp. Schizaphis graminum (strain Sg) protein is UPF0053 protein BUsg_314.